The sequence spans 587 residues: Complement component C8 beta chain (587 aa).

Positions 1 to 31 are cleaved as a signal peptide; that stretch reads MNHKLKPTVGLGYCLLCAALCLLLLRDVAIA. A propeptide spanning residues 32 to 44 is cleaved from the precursor; sequence GSGEEPSGVREAR. Positions 56–111 constitute a TSP type-1 1 domain; it reads DCVQSEWSSWTRCDVCRKKRYRYAKLVQPSQFGGEPCHVQGKEVEPCSPPSRYDCT. 5 cysteine pairs are disulfide-bonded: Cys-57–Cys-92, Cys-68–Cys-102, Cys-71–Cys-110, Cys-118–Cys-129, and Cys-123–Cys-142. Residues Trp-62 and Trp-65 are each glycosylated (C-linked (Man) tryptophan). The 43-residue stretch at 117–159 folds into the LDL-receptor class A domain; sequence LCEGFLCTYTGRCVPIDLRCNGDDDCGDWSAEKGSPKVPKACK. Leu-134, Asn-137, Asp-139, Asp-141, and Glu-148 together coordinate Ca(2+). The region spanning 154-500 is the MACPF domain; the sequence is VPKACKQEAQ…EYLEESSSCR (347 aa). Cys-158 and Cys-196 form a disulfide bridge. 4 consecutive transmembrane segments (beta stranded) span residues 248-255, 258-265, 375-382, and 388-395; these read TTVSIGFA, GVAEFGFN, EQIVLKVG, and VYVTVGLE. Disulfide bonds link Cys-374/Cys-399, Cys-499/Cys-546, Cys-501/Cys-517, Cys-504/Cys-519, and Cys-521/Cys-530. In terms of domain architecture, EGF-like spans 501–531; the sequence is CAPCRNNGLAVLKGTRCECVCPSGYSGLGCE. The TSP type-1 2 domain occupies 541-587; it reads DGSWSCWGSWSPCRGRSKTRSRQCNNPAPSSGGIACRGLQMETTDCF. C-linked (Man) tryptophan glycosylation is found at Trp-547 and Trp-550. Residues Cys-553 and Cys-586 are joined by a disulfide bond.

Belongs to the complement C6/C7/C8/C9 family. As to quaternary structure, heterotrimer of 3 chains: alpha (C8A), beta (C8B) and gamma (C8G); the alpha and gamma chains are disulfide bonded. Component of the membrane attack complex (MAC), composed of complement C5b, C6, C7, C8A, C8B, C8G and multiple copies of the pore-forming subunit C9.

The protein localises to the secreted. The protein resides in the target cell membrane. Functionally, component of the membrane attack complex (MAC), a multiprotein complex activated by the complement cascade, which inserts into a target cell membrane and forms a pore, leading to target cell membrane rupture and cell lysis. The MAC is initiated by proteolytic cleavage of C5 into complement C5b in response to the classical, alternative, lectin and GZMK complement pathways. The complement pathways consist in a cascade of proteins that leads to phagocytosis and breakdown of pathogens and signaling that strengthens the adaptive immune system. C8B, together with C8A and C8G, inserts into the target membrane, but does not form pores by itself. During MAC assembly, associates with C5b, C6 and C7 to form the C5b8 intermediate complex that inserts into the target membrane and traverses the bilayer increasing membrane rigidity. The protein is Complement component C8 beta chain (c8b) of Oncorhynchus mykiss (Rainbow trout).